Reading from the N-terminus, the 41-residue chain is Large ribosomal subunit protein bL36 (41 aa).

The protein belongs to the bacterial ribosomal protein bL36 family.

The polypeptide is Large ribosomal subunit protein bL36 (Methylorubrum extorquens (strain CM4 / NCIMB 13688) (Methylobacterium extorquens)).